Here is a 546-residue protein sequence, read N- to C-terminus: Nuclear pore complex protein Nup58 (546 aa).

17 consecutive repeat copies span residues 22–23 (FG), 36–37 (FG), 45–46 (FG), 64–65 (FG), 73–74 (FG), 82–83 (FG), 92–93 (FG), 101–102 (FG), 110–111 (FG), 119–120 (FG), 128–129 (FG), 137–138 (FG), 146–147 (FG), 155–156 (FG), 166–167 (FG), 197–198 (FG), and 199–200 (FG). Positions 22–200 (FGARPATTTA…TTAPPAFGFG (179 aa)) are 17 X 2 AA repeats of F-G.

Belongs to the NUP58 family. As to quaternary structure, component of the nuclear pore complex. Interacts with Nup54. Interacts (via C-terminus) with fs(1)Yb; this interaction occurs in a RNA-independent manner. Interacts with sbr/nxf1. Interacts with Nxt1. O-glycosylated; contains O-GlcNAc. O-GlcNAcylation increases with increasing ambient temperature.

It is found in the nucleus. Its subcellular location is the nuclear pore complex. Component of the nuclear pore complex, a complex required for the trafficking across the nuclear membrane. Together with Nup54, required for transposable element silencing regulation in ovarian follicle cells. By interacting with the nuclear (Nxf1/Nxt1) and cytosolic (fs(1)Yb) components of the flamenco (flam) transcripts processing pathway, enables export and subsequent piRNA production. The sequence is that of Nuclear pore complex protein Nup58 from Drosophila melanogaster (Fruit fly).